Here is a 405-residue protein sequence, read N- to C-terminus: Aspartokinase (405 aa).

ACT domains lie at 267–344 (VSME…AKVS) and 345–405 (IVGV…QLDQ).

It belongs to the aspartokinase family.

The catalysed reaction is L-aspartate + ATP = 4-phospho-L-aspartate + ADP. It functions in the pathway amino-acid biosynthesis; L-lysine biosynthesis via DAP pathway; (S)-tetrahydrodipicolinate from L-aspartate: step 1/4. The protein operates within amino-acid biosynthesis; L-methionine biosynthesis via de novo pathway; L-homoserine from L-aspartate: step 1/3. Its pathway is amino-acid biosynthesis; L-threonine biosynthesis; L-threonine from L-aspartate: step 1/5. The protein is Aspartokinase (lysC) of Helicobacter pylori (strain J99 / ATCC 700824) (Campylobacter pylori J99).